Reading from the N-terminus, the 587-residue chain is Urease subunit alpha (587 aa).

A Urease domain is found at 134-572 (GGIDTHVHFI…LPLAQRYLYT (439 aa)). Ni(2+) is bound by residues H139, H141, and K222. K222 carries the post-translational modification N6-carboxylysine. H224 lines the substrate pocket. 2 residues coordinate Ni(2+): H251 and H277. The active-site Proton donor is H325. Ni(2+) is bound at residue D365.

The protein belongs to the metallo-dependent hydrolases superfamily. Urease alpha subunit family. Heterotrimer of UreA (gamma), UreB (beta) and UreC (alpha) subunits. Three heterotrimers associate to form the active enzyme. The cofactor is Ni cation. In terms of processing, carboxylation allows a single lysine to coordinate two nickel ions.

Its subcellular location is the cytoplasm. It catalyses the reaction urea + 2 H2O + H(+) = hydrogencarbonate + 2 NH4(+). It functions in the pathway nitrogen metabolism; urea degradation; CO(2) and NH(3) from urea (urease route): step 1/1. The chain is Urease subunit alpha from Clostridium perfringens.